A 198-amino-acid polypeptide reads, in one-letter code: uncharacterized protein (198 aa).

The protein to A.aeolicus aq_1211 and aq_1583.

This is an uncharacterized protein from Aquifex aeolicus (strain VF5).